A 185-amino-acid chain; its full sequence is AP-3 complex subunit sigma (185 aa).

The protein belongs to the adaptor complexes small subunit family. As to quaternary structure, adaptor protein complex 3 (AP-3) is a heterotetramer composed of 2 large adaptins (APL5 and APL6), a medium adaptin (APM3) and a small adaptin (APS3).

The protein localises to the golgi apparatus. Its subcellular location is the cytoplasmic vesicle membrane. Functionally, part of the AP-3 complex, an adaptor-related complex which is not clathrin-associated. The complex is associated with the Golgi region as well as more peripheral structures. It facilitates the budding of vesicles from the Golgi membrane and may be directly involved in trafficking to the vacuole. In Eremothecium gossypii (strain ATCC 10895 / CBS 109.51 / FGSC 9923 / NRRL Y-1056) (Yeast), this protein is AP-3 complex subunit sigma (APS3).